Reading from the N-terminus, the 282-residue chain is Pantothenate synthetase (282 aa).

30 to 37 (MGYLHEGH) is an ATP binding site. Residue H37 is the Proton donor of the active site. (R)-pantoate is bound at residue Q61. Q61 contacts beta-alanine. ATP is bound at residue 147–150 (GMKD). Q153 serves as a coordination point for (R)-pantoate. ATP contacts are provided by residues V176 and 184 to 187 (KSSR).

Belongs to the pantothenate synthetase family. As to quaternary structure, homodimer.

It localises to the cytoplasm. The enzyme catalyses (R)-pantoate + beta-alanine + ATP = (R)-pantothenate + AMP + diphosphate + H(+). The protein operates within cofactor biosynthesis; (R)-pantothenate biosynthesis; (R)-pantothenate from (R)-pantoate and beta-alanine: step 1/1. Functionally, catalyzes the condensation of pantoate with beta-alanine in an ATP-dependent reaction via a pantoyl-adenylate intermediate. This is Pantothenate synthetase from Bacillus mycoides (strain KBAB4) (Bacillus weihenstephanensis).